The following is a 353-amino-acid chain: Glutamine synthetase cytosolic isozyme 1-5 (353 aa).

Thr2 is subject to N-acetylthreonine. Residue Ser3 is modified to Phosphoserine. Positions 19–99 (IIAEYIWIGG…VMCDAYRPAG (81 aa)) constitute a GS beta-grasp domain. The GS catalytic domain maps to 106–353 (NRHKAVKIFD…TSMIAETTIL (248 aa)).

Belongs to the glutamine synthetase family. Homooctamer. Not expressed in roots.

The protein localises to the cytoplasm. It catalyses the reaction L-glutamate + NH4(+) + ATP = L-glutamine + ADP + phosphate + H(+). This Arabidopsis thaliana (Mouse-ear cress) protein is Glutamine synthetase cytosolic isozyme 1-5 (GLN1-5).